A 350-amino-acid chain; its full sequence is Ribosome production factor 2 homolog (350 aa).

Residues 28 to 266 (KTCLFLRGTT…LGRMREPDPA (239 aa)) form the Brix domain. The span at 192-202 (PTSSTSTNNDG) shows a compositional bias: polar residues. Disordered stretches follow at residues 192–219 (PTSS…SIDP) and 301–350 (MGKT…KVKG).

The protein belongs to the RPF2 family. Component of a hexameric 5S RNP precursor complex, composed of 5S RNA, RRS1, RPF2, RPL5, RPL11 and SYO1; this complex acts as a precursor for ribosome assembly.

Its subcellular location is the nucleus. It is found in the nucleolus. Functionally, involved in ribosomal large subunit assembly. In Chaetomium thermophilum (strain DSM 1495 / CBS 144.50 / IMI 039719) (Thermochaetoides thermophila), this protein is Ribosome production factor 2 homolog.